The following is a 907-amino-acid chain: Envelope glycoprotein B (907 aa).

Positions 1–22 (MESRIWCLVVCVNLCIVCLGAA) are cleaved as a signal peptide. Residues 23–751 (VSSSSTRGTS…EGVATFLKNP (729 aa)) lie on the Virion surface side of the membrane. Positions 29–62 (RGTSATHSHHSSHTTSAAHSRSGSVSQRVTSSQT) are disordered. Residues 41–62 (HTTSAAHSRSGSVSQRVTSSQT) show a composition bias toward low complexity. N-linked (GlcNAc...) asparagine; by host glycosylation is found at Asn-68, Asn-73, and Asn-85. Intrachain disulfides connect Cys-94–Cys-551, Cys-111–Cys-507, Cys-185–Cys-250, and Cys-344–Cys-391. Residues 152–158 (SYAYIHT) form an involved in fusion and/or binding to host membrane region. Asn-208 carries N-linked (GlcNAc...) asparagine; by host glycosylation. The tract at residues 237–244 (GSTWLYRE) is involved in fusion and/or binding to host membrane. N-linked (GlcNAc...) asparagine; by host glycosylation is found at Asn-281, Asn-286, Asn-302, Asn-341, Asn-383, Asn-405, Asn-409, Asn-417, Asn-447, Asn-452, Asn-456, Asn-466, Asn-555, and Asn-586. Cysteines 574 and 611 form a disulfide. Hydrophobic membrane proximal region stretches follow at residues 697 to 749 (VEDK…TFLK) and 708 to 748 (YLKG…ATFL). The chain crosses the membrane as a helical span at residues 752-772 (FGAFTIILVAIAVVIIIYLIY). Topologically, residues 773 to 907 (TRQRRLCMQP…LKDSDEEENV (135 aa)) are intravirion. 2 stretches are compositionally biased toward polar residues: residues 798 to 810 (VTSG…SLQA) and 860 to 877 (RAQQ…GTQD). Disordered stretches follow at residues 798–838 (VTSG…TAAP) and 860–907 (RAQQ…EENV). Positions 878-887 (KGQKPNLLDR) are enriched in basic and acidic residues. The short motif at 895 to 898 (YRHL) is the Internalization motif element.

It belongs to the herpesviridae glycoprotein B family. Homotrimer; disulfide-linked. Binds to heparan sulfate proteoglycans. Interacts with gH/gL heterodimer. Interacts with host C-type lectin CD209/DC-SIGN. Interacts with host ITGB1, EGFR, and PDGFRA. A proteolytic cleavage by host furin generates two subunits that remain linked by disulfide bonds.

The protein localises to the virion membrane. Its subcellular location is the host cell membrane. The protein resides in the host endosome membrane. It is found in the host Golgi apparatus membrane. Its function is as follows. Envelope glycoprotein that plays a role in host cell entry, cell to-cell virus transmission, and fusion of infected cells. May be involved in the initial attachment via binding to heparan sulfate together with the gM/gN complex that binds heparin with higher affinity. Interacts with host integrin ITGB1, PDGFRA and EGFR that likely serve as postattachment entry receptors. Also participates in the fusion of viral and cellular membranes leading to virus entry into the host cell. Membrane fusion is mediated by the fusion machinery composed at least of gB and the heterodimer gH/gL. In Homo sapiens (Human), this protein is Envelope glycoprotein B.